The chain runs to 346 residues: UPF0324 membrane protein FN0533 (346 aa).

10 helical membrane-spanning segments follow: residues Leu5–Gly22, Leu27–Ala49, Val62–Ser81, Ser86–Ile108, Val115–Ile137, Ala147–Leu169, Leu216–Asn233, Ile248–Ile270, Ile283–Ile305, and Ile315–Ile337.

The protein belongs to the UPF0324 family.

The protein localises to the cell membrane. In Fusobacterium nucleatum subsp. nucleatum (strain ATCC 25586 / DSM 15643 / BCRC 10681 / CIP 101130 / JCM 8532 / KCTC 2640 / LMG 13131 / VPI 4355), this protein is UPF0324 membrane protein FN0533.